A 481-amino-acid chain; its full sequence is NADH-quinone oxidoreductase subunit N (481 aa).

Helical transmembrane passes span 11–31 (AYPE…DLFA), 37–57 (YLAF…TCGI), 74–94 (AMSD…LIYS), 103–123 (LLKG…MVMV), 128–148 (LITL…MVAL), 162–182 (FFVL…MLYG), 205–225 (IFII…SAVP), 238–258 (PTAV…GFVM), 272–292 (WQGM…IAAI), 300–320 (MLAY…IAAG), 328–348 (MFYV…IMLV), 371–391 (LAFM…MIGF), 405–425 (GYIW…FYYL), and 457–477 (LAII…LSAI).

Belongs to the complex I subunit 2 family. As to quaternary structure, NDH-1 is composed of 14 different subunits. Subunits NuoA, H, J, K, L, M, N constitute the membrane sector of the complex.

The protein localises to the cell inner membrane. It carries out the reaction a quinone + NADH + 5 H(+)(in) = a quinol + NAD(+) + 4 H(+)(out). In terms of biological role, NDH-1 shuttles electrons from NADH, via FMN and iron-sulfur (Fe-S) centers, to quinones in the respiratory chain. The immediate electron acceptor for the enzyme in this species is believed to be ubiquinone. Couples the redox reaction to proton translocation (for every two electrons transferred, four hydrogen ions are translocated across the cytoplasmic membrane), and thus conserves the redox energy in a proton gradient. In Nitrosomonas europaea (strain ATCC 19718 / CIP 103999 / KCTC 2705 / NBRC 14298), this protein is NADH-quinone oxidoreductase subunit N.